The chain runs to 464 residues: Dihydrolipoyllysine-residue succinyltransferase component of 2-oxoglutarate dehydrogenase complex 1, mitochondrial (464 aa).

The N-terminal 86 residues, 1 to 86, are a transit peptide targeting the mitochondrion; sequence MMLRAVFRRA…TALQRWVRPF (86 aa). Residues 93–168 form the Lipoyl-binding domain; it reads VVEAVVPHMG…EPGNKVARIS (76 aa). Lys134 is subject to N6-lipoyllysine. Residues 168–242 are disordered; it reads STSADAVSHV…DRERRVPMTR (75 aa). Residues 196 to 210 are compositionally biased toward basic and acidic residues; the sequence is EKPKVESTKVAEKPK. The span at 211-220 shows a compositional bias: pro residues; the sequence is APSPPPPPPS. Residues His435 and Asp439 contribute to the active site.

It belongs to the 2-oxoacid dehydrogenase family. As to quaternary structure, forms a 24-polypeptide structural core with octahedral symmetry. The cofactor is (R)-lipoate.

Its subcellular location is the mitochondrion. It carries out the reaction N(6)-[(R)-dihydrolipoyl]-L-lysyl-[protein] + succinyl-CoA = N(6)-[(R)-S(8)-succinyldihydrolipoyl]-L-lysyl-[protein] + CoA. It participates in amino-acid degradation; L-lysine degradation via saccharopine pathway; glutaryl-CoA from L-lysine: step 6/6. Functionally, the 2-oxoglutarate dehydrogenase complex catalyzes the overall conversion of 2-oxoglutarate to succinyl-CoA and CO(2). It contains multiple copies of three enzymatic components: 2-oxoglutarate dehydrogenase (E1), dihydrolipoamide succinyltransferase (E2) and lipoamide dehydrogenase (E3). This chain is Dihydrolipoyllysine-residue succinyltransferase component of 2-oxoglutarate dehydrogenase complex 1, mitochondrial, found in Arabidopsis thaliana (Mouse-ear cress).